Consider the following 408-residue polypeptide: LL-diaminopimelate aminotransferase (408 aa).

Substrate-binding residues include Tyr-15 and Gly-42. Residues Tyr-72, 108–109 (SK), Tyr-132, Asn-187, Tyr-218, and 246–248 (SFS) contribute to the pyridoxal 5'-phosphate site. Substrate is bound by residues Lys-109, Tyr-132, and Asn-187. Lys-249 is subject to N6-(pyridoxal phosphate)lysine. Residues Arg-257 and Asn-292 each contribute to the pyridoxal 5'-phosphate site. The substrate site is built by Asn-292 and Arg-388.

Belongs to the class-I pyridoxal-phosphate-dependent aminotransferase family. LL-diaminopimelate aminotransferase subfamily. Homodimer. Pyridoxal 5'-phosphate is required as a cofactor.

It carries out the reaction (2S,6S)-2,6-diaminopimelate + 2-oxoglutarate = (S)-2,3,4,5-tetrahydrodipicolinate + L-glutamate + H2O + H(+). Its pathway is amino-acid biosynthesis; L-lysine biosynthesis via DAP pathway; LL-2,6-diaminopimelate from (S)-tetrahydrodipicolinate (aminotransferase route): step 1/1. In terms of biological role, involved in the synthesis of meso-diaminopimelate (m-DAP or DL-DAP), required for both lysine and peptidoglycan biosynthesis. Catalyzes the direct conversion of tetrahydrodipicolinate to LL-diaminopimelate. In Prochlorococcus marinus (strain AS9601), this protein is LL-diaminopimelate aminotransferase.